Reading from the N-terminus, the 355-residue chain is DNA-binding protein RHL1 (355 aa).

3 disordered regions span residues 1-26 (MVRASSSKKGGSKGGDKDDAESKQRK), 181-215 (DFQGGAGGAASVKKLASPEIGSQPTETDSPEVDNE), and 229-355 (IQVT…SSKA). Residues 14 to 23 (GGDKDDAESK) show a composition bias toward basic and acidic residues. Composition is skewed to low complexity over residues 230–246 (QVTPPVQLTPPVQVTPV) and 260–274 (AETSSEASSGESEGN). 2 stretches are compositionally biased toward basic and acidic residues: residues 281–296 (KPLLEPESSTRSREES) and 309–326 (LPEELPAKREKLKSKDSK). The segment covering 344–355 (AGTSKAKSSSKA) has biased composition (low complexity).

In terms of assembly, interacts with BIN4 and TOP6A, but not with TOP6B. As to expression, expressed inproliferating and endoreduplicating cells.

It localises to the nucleus. Component of the DNA topoisomerase VI complex involved in chromatin organization and progression of endoreduplication cycles. Binds to DNA. Required for endoreduplication beyond 8C. The sequence is that of DNA-binding protein RHL1 (RHL1) from Arabidopsis thaliana (Mouse-ear cress).